Here is a 345-residue protein sequence, read N- to C-terminus: Protein RecA (345 aa).

66–73 (GPESSGKT) contributes to the ATP binding site.

This sequence belongs to the RecA family.

It localises to the cytoplasm. Can catalyze the hydrolysis of ATP in the presence of single-stranded DNA, the ATP-dependent uptake of single-stranded DNA by duplex DNA, and the ATP-dependent hybridization of homologous single-stranded DNAs. It interacts with LexA causing its activation and leading to its autocatalytic cleavage. The chain is Protein RecA from Helicobacter hepaticus (strain ATCC 51449 / 3B1).